The sequence spans 132 residues: Cliotide T2 (132 aa).

An N-terminal signal peptide occupies residues 1–28; that stretch reads MAYVRLTSLAVLFFLAASVMLNVKKTEG. Residues 29 to 58 constitute a cross-link (cyclopeptide (Gly-Asn)); that stretch reads GEFLKCGESCVQGECYTPGCSCDWPICKKN. Intrachain disulfides connect cysteine 34/cysteine 48, cysteine 38/cysteine 50, and cysteine 43/cysteine 55. Positions 59-132 are cleaved as a propeptide — removed in mature form; it reads HIIATNAKTV…NLKMPMTIIN (74 aa).

This is a cyclic peptide. In terms of tissue distribution, expressed in flower, stem, shoot and pod but not in root, leaf, seed and nodule (at protein level).

Probably participates in a plant defense mechanism. Not active against Gram-negative bacteria E.coli ATCC 700926, K.pneumoniae ATTC 13883 and P.aeruginosa ATCC 39018 at concentration up to 100 uM. Has cytotoxic but no hemolytic activity. The protein is Cliotide T2 of Clitoria ternatea (Butterfly pea).